Consider the following 144-residue polypeptide: Interleukin-9 (144 aa).

A signal peptide spans 1–18 (MLLAMVLTSALLLCSVAG). Position 19 is a pyrrolidone carboxylic acid (Gln19). 4 N-linked (GlcNAc...) asparagine glycosylation sites follow: Asn50, Asn63, Asn78, and Asn114.

Belongs to the IL-7/IL-9 family. Interacts with IL9R. Interacts with IL2RG.

It localises to the secreted. In terms of biological role, multifunctional cytokine secreted mainly by T-helper 2 lymphocytes and also mast cells or NKT cells that plays important roles in the immune response against parasites. Affects intestinal epithelial permeability and adaptive immunity. In addition, induces the differentiation of specific T-cell subsets such as IL-17 producing helper T-cells (TH17) and also proliferation and differentiation of mast cells. Mechanistically, exerts its biological effects through a receptor composed of IL9R subunit and a signal transducing subunit IL2RG. Receptor stimulation results in the rapid activation of JAK1 and JAK3 kinase activities leading to STAT1, STAT3 and STAT5-mediated transcriptional programs. Induction of differentiation genes seems to be mediated by STAT1 alone, while protection of cells from apoptosis depends on STAT3 and STAT5. This chain is Interleukin-9 (IL9), found in Homo sapiens (Human).